The chain runs to 487 residues: Protein nucleotidyltransferase YdiU (487 aa).

The ATP site is built by Gly-90, Gly-92, Arg-93, Lys-113, Asp-125, Gly-126, Arg-176, and Arg-183. Asp-252 serves as the catalytic Proton acceptor. 2 residues coordinate Mg(2+): Asn-253 and Asp-262. Asp-262 is a binding site for ATP.

The protein belongs to the SELO family. It depends on Mg(2+) as a cofactor. Requires Mn(2+) as cofactor.

It carries out the reaction L-seryl-[protein] + ATP = 3-O-(5'-adenylyl)-L-seryl-[protein] + diphosphate. The catalysed reaction is L-threonyl-[protein] + ATP = 3-O-(5'-adenylyl)-L-threonyl-[protein] + diphosphate. The enzyme catalyses L-tyrosyl-[protein] + ATP = O-(5'-adenylyl)-L-tyrosyl-[protein] + diphosphate. It catalyses the reaction L-histidyl-[protein] + UTP = N(tele)-(5'-uridylyl)-L-histidyl-[protein] + diphosphate. It carries out the reaction L-seryl-[protein] + UTP = O-(5'-uridylyl)-L-seryl-[protein] + diphosphate. The catalysed reaction is L-tyrosyl-[protein] + UTP = O-(5'-uridylyl)-L-tyrosyl-[protein] + diphosphate. Its function is as follows. Nucleotidyltransferase involved in the post-translational modification of proteins. It can catalyze the addition of adenosine monophosphate (AMP) or uridine monophosphate (UMP) to a protein, resulting in modifications known as AMPylation and UMPylation. The chain is Protein nucleotidyltransferase YdiU from Pseudomonas fluorescens (strain Pf0-1).